The chain runs to 192 residues: uncharacterized protein (192 aa).

A B12-binding domain is found at 72-192 (GATVLLIVPP…SLVISEFSLV (121 aa)).

This is an uncharacterized protein from Rhodobacter capsulatus (Rhodopseudomonas capsulata).